The following is a 156-amino-acid chain: Egg-lysin (156 aa).

A signal peptide spans 1–18 (MKLLVLCVFAMMATLAVS).

In terms of assembly, monomer. Homodimer. Molecules associate into dimers and then rapidly dissociate again. Interacts (as a monomer) with the egg vitelline layer protein VERL (via VERL repeats); each VERL chain can bind multiple copies of lysin. Sperm.

Its subcellular location is the cytoplasmic vesicle. The protein localises to the secretory vesicle. The protein resides in the acrosome lumen. Creates a 3 um hole in the egg vitelline layer through which the sperm passes. Does not have enzyme activity. Species-specific interaction between the sperm protein lysin and the egg protein VERL exposes a basic surface on lysin that may dissociate the egg vitelline layer via electrostatic repulsion. Plays a role in ensuring species-specific fertilization. In Haliotis cracherodii (Black abalone), this protein is Egg-lysin.